The sequence spans 238 residues: Ribonuclease PH (238 aa).

Residues arginine 86 and 124–126 each bind phosphate; that span reads GTR.

It belongs to the RNase PH family. As to quaternary structure, homohexameric ring arranged as a trimer of dimers.

The catalysed reaction is tRNA(n+1) + phosphate = tRNA(n) + a ribonucleoside 5'-diphosphate. In terms of biological role, phosphorolytic 3'-5' exoribonuclease that plays an important role in tRNA 3'-end maturation. Removes nucleotide residues following the 3'-CCA terminus of tRNAs; can also add nucleotides to the ends of RNA molecules by using nucleoside diphosphates as substrates, but this may not be physiologically important. Probably plays a role in initiation of 16S rRNA degradation (leading to ribosome degradation) during starvation. The polypeptide is Ribonuclease PH (Chelativorans sp. (strain BNC1)).